Reading from the N-terminus, the 327-residue chain is 2-methoxy-6-polyprenyl-1,4-benzoquinol methylase, mitochondrial (327 aa).

A mitochondrion-targeting transit peptide spans 1-43 (MAAPIRAFVLRVLSDSTRNIHHVLRCRSKYLCRRAAITARRGY). S-adenosyl-L-methionine is bound by residues threonine 117, aspartate 171, and 199 to 200 (DA).

This sequence belongs to the class I-like SAM-binding methyltransferase superfamily. MenG/UbiE family. As to quaternary structure, component of a multi-subunit COQ enzyme complex, composed of at least coq3, coq4, coq5, coq6, coq7 and coq9.

It localises to the mitochondrion inner membrane. The enzyme catalyses a 2-methoxy-6-(all-trans-polyprenyl)benzene-1,4-diol + S-adenosyl-L-methionine = a 5-methoxy-2-methyl-3-(all-trans-polyprenyl)benzene-1,4-diol + S-adenosyl-L-homocysteine + H(+). It functions in the pathway cofactor biosynthesis; ubiquinone biosynthesis. Functionally, methyltransferase required for the conversion of 2-polyprenyl-6-methoxy-1,4-benzoquinol (DDMQH2) to 2-polyprenyl-3-methyl-6-methoxy-1,4-benzoquinol (DMQH2). In Danio rerio (Zebrafish), this protein is 2-methoxy-6-polyprenyl-1,4-benzoquinol methylase, mitochondrial.